The primary structure comprises 621 residues: Chaperone protein HscA homolog (621 aa).

Belongs to the heat shock protein 70 family.

Functionally, chaperone involved in the maturation of iron-sulfur cluster-containing proteins. Has a low intrinsic ATPase activity which is markedly stimulated by HscB. In Cupriavidus metallidurans (strain ATCC 43123 / DSM 2839 / NBRC 102507 / CH34) (Ralstonia metallidurans), this protein is Chaperone protein HscA homolog.